The chain runs to 114 residues: Probable prefoldin subunit 2 (114 aa).

This sequence belongs to the prefoldin subunit beta family. Heterohexamer of two PFD-alpha type and four PFD-beta type subunits.

In terms of biological role, binds specifically to cytosolic chaperonin (c-CPN) and transfers target proteins to it. Binds to nascent polypeptide chain and promotes folding in an environment in which there are many competing pathways for nonnative proteins. This is Probable prefoldin subunit 2 from Schizosaccharomyces pombe (strain 972 / ATCC 24843) (Fission yeast).